A 188-amino-acid polypeptide reads, in one-letter code: MKVIASTLRKGNVVDKDGKLYVILTAENIHPGKGTPVTQLDMRRITDGVKISERYRTTEQVERAFVEDRDHTFLYQDGEGYHFMNPESYEQIAVPADVVGDAAPYLQEGMTVTLSTHNGVPLTIELPQRMTFEIVETEPVTKGQTASSSYKPALLSNGVKTSVPPHVSTGTRVVIMTADGSYVERAKD.

It belongs to the elongation factor P family.

The protein resides in the cytoplasm. It participates in protein biosynthesis; polypeptide chain elongation. Its function is as follows. Involved in peptide bond synthesis. Stimulates efficient translation and peptide-bond synthesis on native or reconstituted 70S ribosomes in vitro. Probably functions indirectly by altering the affinity of the ribosome for aminoacyl-tRNA, thus increasing their reactivity as acceptors for peptidyl transferase. This is Elongation factor P from Methylorubrum extorquens (strain CM4 / NCIMB 13688) (Methylobacterium extorquens).